A 175-amino-acid chain; its full sequence is ATP synthase subunit delta (175 aa).

It belongs to the ATPase delta chain family. F-type ATPases have 2 components, F(1) - the catalytic core - and F(0) - the membrane proton channel. F(1) has five subunits: alpha(3), beta(3), gamma(1), delta(1), epsilon(1). F(0) has three main subunits: a(1), b(2) and c(10-14). The alpha and beta chains form an alternating ring which encloses part of the gamma chain. F(1) is attached to F(0) by a central stalk formed by the gamma and epsilon chains, while a peripheral stalk is formed by the delta and b chains.

The protein localises to the cell inner membrane. In terms of biological role, f(1)F(0) ATP synthase produces ATP from ADP in the presence of a proton or sodium gradient. F-type ATPases consist of two structural domains, F(1) containing the extramembraneous catalytic core and F(0) containing the membrane proton channel, linked together by a central stalk and a peripheral stalk. During catalysis, ATP synthesis in the catalytic domain of F(1) is coupled via a rotary mechanism of the central stalk subunits to proton translocation. Its function is as follows. This protein is part of the stalk that links CF(0) to CF(1). It either transmits conformational changes from CF(0) to CF(1) or is implicated in proton conduction. This chain is ATP synthase subunit delta, found in Xanthomonas euvesicatoria pv. vesicatoria (strain 85-10) (Xanthomonas campestris pv. vesicatoria).